Reading from the N-terminus, the 133-residue chain is Small ribosomal subunit protein uS9 (133 aa).

Over residues 102–113 (KVEGYLSRDPRA) the composition is skewed to basic and acidic residues. Residues 102-133 (KVEGYLSRDPRAKERRKYGLKKARKAPQFSKR) form a disordered region. Basic residues predominate over residues 114–133 (KERRKYGLKKARKAPQFSKR).

The protein belongs to the universal ribosomal protein uS9 family.

This is Small ribosomal subunit protein uS9 from Gloeobacter violaceus (strain ATCC 29082 / PCC 7421).